The primary structure comprises 64 residues: OPG024 protein (64 aa).

Positions 1-64 (MSSKGGSSGG…GGVKSGTGKI (64 aa)) are disordered. Over residues 23–34 (NKGSKTYTSSGS) the composition is skewed to low complexity. The segment covering 49-64 (VNGGVNGGVKSGTGKI) has biased composition (gly residues).

This sequence belongs to the orthopoxvirus OPG024 family.

This is OPG024 protein (OPG023) from Cynomys gunnisoni (Gunnison's prairie dog).